A 405-amino-acid chain; its full sequence is Bestrophin homolog 14 (405 aa).

Helical transmembrane passes span 28-48 (LIGF…LLDE), 63-83 (IGAQ…LIVA), 223-243 (LVYT…CLIG), and 256-276 (EITI…LGWL).

This sequence belongs to the anion channel-forming bestrophin (TC 1.A.46) family. Calcium-sensitive chloride channel subfamily.

It is found in the membrane. This is Bestrophin homolog 14 (best-14) from Caenorhabditis elegans.